Reading from the N-terminus, the 213-residue chain is Golgi apparatus membrane protein TVP23 homolog A (213 aa).

4 helical membrane passes run 32-52, 54-74, 123-143, and 150-170; these read PLAT…YVSC, WFSK…SLDF, IFWL…FSTL, and WLAL…GYIL.

This sequence belongs to the TVP23 family.

The protein resides in the membrane. This Homo sapiens (Human) protein is Golgi apparatus membrane protein TVP23 homolog A (TVP23A).